The following is a 424-amino-acid chain: Folate-like transporter 2 (424 aa).

Residue N35 is glycosylated (N-linked (GlcNAc...) asparagine). The next 6 membrane-spanning stretches (helical) occupy residues 48 to 68, 71 to 91, 99 to 119, 136 to 156, 164 to 184, and 233 to 253; these read IWTYSYLITLIPAFLLTDVFL, PLLVFEAFSYFLCWVIFVFGK, LEVFYGWATATEIAYFAYIYV, ALLVGRFLAYALAQLLIGLNW, IISLVAMTIAVFLALILPGVE, and PLILKWSVWSALSSCIFYQVT. N-linked (GlcNAc...) asparagine glycosylation occurs at N254. A run of 4 helical transmembrane segments spans residues 299 to 319, 324 to 344, 361 to 381, and 392 to 412; these read WGDLLLAVGSIGQAGLLFWMS, IVVLYLSYIFYRVIYQLTTTI, LFGINTFVALLLQSILTAVVI, and FVVYSCYHLVVAFGFAIIFGI.

This sequence belongs to the reduced folate carrier (RFC) transporter (TC 2.A.48) family.

It localises to the membrane. Unlike folt-1, does not appear to act as a folate transporter. This is Folate-like transporter 2 (folt-2) from Caenorhabditis elegans.